A 160-amino-acid polypeptide reads, in one-letter code: Dihydrofolate reductase (160 aa).

The DHFR domain occupies 1–160 (MLIAIWAMTQ…NVNYYRKKQQ (160 aa)). Position 5–7 (5–7 (IWA)) interacts with substrate. Residues 6–7 (WA) and 14–19 (IGNNNT) contribute to the NADP(+) site. Glu27 contributes to the substrate binding site. 43 to 46 (GRKT) is a binding site for NADP(+). Residue Arg57 coordinates substrate. NADP(+)-binding positions include 62–65 (LSKD) and 101–106 (CGGKSV). Residue Ser120 participates in substrate binding.

Belongs to the dihydrofolate reductase family.

It carries out the reaction (6S)-5,6,7,8-tetrahydrofolate + NADP(+) = 7,8-dihydrofolate + NADPH + H(+). It functions in the pathway cofactor biosynthesis; tetrahydrofolate biosynthesis; 5,6,7,8-tetrahydrofolate from 7,8-dihydrofolate: step 1/1. Functionally, key enzyme in folate metabolism. Catalyzes an essential reaction for de novo glycine and purine synthesis, and for DNA precursor synthesis. The sequence is that of Dihydrofolate reductase (folA) from Mycoplasma genitalium (strain ATCC 33530 / DSM 19775 / NCTC 10195 / G37) (Mycoplasmoides genitalium).